Consider the following 151-residue polypeptide: Phosphoribosyl-AMP cyclohydrolase (151 aa).

Mg(2+) is bound at residue aspartate 94. Cysteine 95 serves as a coordination point for Zn(2+). 2 residues coordinate Mg(2+): aspartate 96 and aspartate 98. Residues cysteine 112 and cysteine 119 each contribute to the Zn(2+) site.

This sequence belongs to the PRA-CH family. In terms of assembly, homodimer. Mg(2+) is required as a cofactor. Zn(2+) serves as cofactor.

The protein localises to the cytoplasm. The enzyme catalyses 1-(5-phospho-beta-D-ribosyl)-5'-AMP + H2O = 1-(5-phospho-beta-D-ribosyl)-5-[(5-phospho-beta-D-ribosylamino)methylideneamino]imidazole-4-carboxamide. It functions in the pathway amino-acid biosynthesis; L-histidine biosynthesis; L-histidine from 5-phospho-alpha-D-ribose 1-diphosphate: step 3/9. Functionally, catalyzes the hydrolysis of the adenine ring of phosphoribosyl-AMP. This is Phosphoribosyl-AMP cyclohydrolase from Rhodopseudomonas palustris (strain TIE-1).